Here is a 207-residue protein sequence, read N- to C-terminus: Urease accessory protein UreG (207 aa).

Residue 13–20 (GPVGSGKT) coordinates GTP.

Belongs to the SIMIBI class G3E GTPase family. UreG subfamily. Homodimer. UreD, UreF and UreG form a complex that acts as a GTP-hydrolysis-dependent molecular chaperone, activating the urease apoprotein by helping to assemble the nickel containing metallocenter of UreC. The UreE protein probably delivers the nickel.

The protein resides in the cytoplasm. In terms of biological role, facilitates the functional incorporation of the urease nickel metallocenter. This process requires GTP hydrolysis, probably effectuated by UreG. This is Urease accessory protein UreG from Azoarcus sp. (strain BH72).